We begin with the raw amino-acid sequence, 204 residues long: Inner membrane protein YagU (204 aa).

At 1-14 the chain is on the periplasmic side; sequence MNIFEQTPPNRRRY. Residues 15-35 traverse the membrane as a helical segment; it reads GLAAFIGLIAGVVSAFVKWGA. The Cytoplasmic segment spans residues 36-100; it reads EVPLPPRSPV…VYTFAGHVFN (65 aa). The helical transmembrane segment at 101–121 threads the bilayer; that stretch reads WVGVTHIIFSIVFAVGYCVVA. Topologically, residues 122–132 are periplasmic; sequence EVFPKIKLWQG. A helical membrane pass occupies residues 133–153; it reads LLAGALAQLFVHMISFPLMGL. Residues 154–204 lie on the Cytoplasmic side of the membrane; that stretch reads TPPLFDLPWYENVSEIFGHLVWFWSIEIIRRDLRNRITHEPDPEIPLGSNR.

As to quaternary structure, homodimer.

It is found in the cell inner membrane. The sequence is that of Inner membrane protein YagU (yagU) from Escherichia coli (strain K12).